The following is a 417-amino-acid chain: Serine hydroxymethyltransferase (417 aa).

(6S)-5,6,7,8-tetrahydrofolate contacts are provided by residues Leu121 and 125 to 127 (GHL). Lys229 is modified (N6-(pyridoxal phosphate)lysine). 355-357 (SPF) is a (6S)-5,6,7,8-tetrahydrofolate binding site.

This sequence belongs to the SHMT family. Homodimer. Requires pyridoxal 5'-phosphate as cofactor.

It is found in the cytoplasm. It catalyses the reaction (6R)-5,10-methylene-5,6,7,8-tetrahydrofolate + glycine + H2O = (6S)-5,6,7,8-tetrahydrofolate + L-serine. It participates in one-carbon metabolism; tetrahydrofolate interconversion. The protein operates within amino-acid biosynthesis; glycine biosynthesis; glycine from L-serine: step 1/1. Catalyzes the reversible interconversion of serine and glycine with tetrahydrofolate (THF) serving as the one-carbon carrier. This reaction serves as the major source of one-carbon groups required for the biosynthesis of purines, thymidylate, methionine, and other important biomolecules. Also exhibits THF-independent aldolase activity toward beta-hydroxyamino acids, producing glycine and aldehydes, via a retro-aldol mechanism. This chain is Serine hydroxymethyltransferase, found in Buchnera aphidicola subsp. Acyrthosiphon pisum (strain 5A).